We begin with the raw amino-acid sequence, 271 residues long: Transcription factor PU.1 (271 aa).

Residues 124–164 are disordered; sequence LSPAHQQSSDEEEGERQSPPLEVSDGEADGLEPGPGLLHGE. Phosphoserine occurs at positions 141 and 147. A compositionally biased stretch (low complexity) spans 154–164; the sequence is LEPGPGLLHGE. The ETS DNA-binding region spans 171-254; the sequence is IRLYQFLLDL…VKKKLTYQFS (84 aa). Positions 218, 231, 234, and 244 each coordinate DNA.

It belongs to the ETS family. In terms of assembly, binds DNA as a monomer. Can form homomers. Directly interacts with CEBPD/NF-IL6-beta; this interaction does not affect DNA-binding properties of each partner. Interacts with NONO/p54(nrb). Interacts with RUNX1/AML1. Interacts with GFI1; the interaction represses SPI1 transcriptional activity, hence blocks SPI1-induced macrophage differentiation of myeloid progenitor cells. Interacts with CEBPE. Interacts with IRF4/Pip and IRF8. Interacts with JUN. Interacts with RB1. Interacts with TBP.

Its subcellular location is the nucleus. Its activity is regulated as follows. Transcriptional activity at macrophage-specific genes is inhibited by interaction with GFI1, which results in the inhibition of SPI1-induced macrophage differentiation of myeloid progenitor cells, but not that of the granulocyte lineage. Its function is as follows. Pioneer transcription factor, which controls hematopoietic cell fate by decompacting stem cell heterochromatin and allowing other transcription factors to enter otherwise inaccessible genomic sites. Once in open chromatin, can directly control gene expression by binding genetic regulatory elements and can also more broadly influence transcription by recruiting transcription factors, such as interferon regulatory factors (IRFs), to otherwise inaccessible genomic regions. Transcriptionally activates genes important for myeloid and lymphoid lineages, such as CSF1R or FCER1A. Transcriptional activation from certain promoters, possibly containing low affinity binding sites, is achieved cooperatively with other transcription factors. FCER1A transactivation is achieved in cooperation with GATA1. May be particularly important for the pro- to pre-B cell transition. Binds (via the ETS domain) onto the purine-rich DNA core sequence 5'-GAGGAA-3', also known as the PU-box. In vitro can bind RNA and interfere with pre-mRNA splicing. The chain is Transcription factor PU.1 (Spi1) from Rattus norvegicus (Rat).